Here is a 66-residue protein sequence, read N- to C-terminus: Protein translocase subunit SecE (66 aa).

The chain crosses the membrane as a helical span at residues 29–49 (LVASTLVVVVAVFIFSPICLV).

This sequence belongs to the SecE/SEC61-gamma family. In terms of assembly, component of the Sec protein translocase complex. Heterotrimer consisting of SecY, SecE and SecG subunits. The heterotrimers can form oligomers, although 1 heterotrimer is thought to be able to translocate proteins. Interacts with the ribosome. Interacts with SecDF, and other proteins may be involved. Interacts with SecA.

The protein localises to the cell inner membrane. In terms of biological role, essential subunit of the Sec protein translocation channel SecYEG. Clamps together the 2 halves of SecY. May contact the channel plug during translocation. The sequence is that of Protein translocase subunit SecE from Rickettsia montanensis.